Here is a 216-residue protein sequence, read N- to C-terminus: UPF0502 protein Ent638_1581 (216 aa).

It belongs to the UPF0502 family.

This Enterobacter sp. (strain 638) protein is UPF0502 protein Ent638_1581.